Here is a 421-residue protein sequence, read N- to C-terminus: Medium-chain specific acyl-CoA dehydrogenase, mitochondrial (421 aa).

The transit peptide at 1–25 (MAAALRRGYKVLRSVSHFECRAQHT) directs the protein to the mitochondrion. Lys69 carries the post-translational modification N6-acetyllysine; alternate. N6-succinyllysine; alternate is present on Lys69. At Lys79 the chain carries N6-acetyllysine. 158–167 (YCVTEPSAGS) provides a ligand contact to FAD. Ser167 is an octanoyl-CoA binding site. Lys179 is subject to N6-succinyllysine. 191-193 (WIT) is an FAD binding site. Residue Lys212 is modified to N6-acetyllysine; alternate. Lys212 carries the N6-succinyllysine; alternate modification. Ser216 is a binding site for octanoyl-CoA. Lys217, Lys259, and Lys271 each carry N6-acetyllysine; alternate. 3 positions are modified to N6-succinyllysine; alternate: Lys217, Lys259, and Lys271. Octanoyl-CoA is bound by residues Asp278 and Arg281. Lys301 is modified (N6-acetyllysine). Residues 306 to 308 (RKT) and 316 to 317 (HQ) each bind FAD. 2 residues coordinate octanoyl-CoA: Arg349 and Thr351. A Phosphothreonine modification is found at Thr351. 374–378 (QIFGG) contacts FAD. Octanoyl-CoA is bound at residue Glu401. Residue Glu401 is the Proton acceptor of the active site. 402–405 (GTAQ) contributes to the FAD binding site.

The protein belongs to the acyl-CoA dehydrogenase family. In terms of assembly, homotetramer. Interacts with the heterodimeric electron transfer flavoprotein ETF. The cofactor is FAD. Post-translationally, acetylated. Could occur at proximity of the cofactor-binding sites and reduce the catalytic activity. Could be deacetylated by SIRT3.

Its subcellular location is the mitochondrion matrix. It carries out the reaction a medium-chain 2,3-saturated fatty acyl-CoA + oxidized [electron-transfer flavoprotein] + H(+) = a medium-chain (2E)-enoyl-CoA + reduced [electron-transfer flavoprotein]. The enzyme catalyses pentanoyl-CoA + oxidized [electron-transfer flavoprotein] + H(+) = (2E)-pentenoyl-CoA + reduced [electron-transfer flavoprotein]. It catalyses the reaction hexanoyl-CoA + oxidized [electron-transfer flavoprotein] + H(+) = (2E)-hexenoyl-CoA + reduced [electron-transfer flavoprotein]. The catalysed reaction is octanoyl-CoA + oxidized [electron-transfer flavoprotein] + H(+) = (2E)-octenoyl-CoA + reduced [electron-transfer flavoprotein]. It carries out the reaction decanoyl-CoA + oxidized [electron-transfer flavoprotein] + H(+) = (2E)-decenoyl-CoA + reduced [electron-transfer flavoprotein]. The enzyme catalyses dodecanoyl-CoA + oxidized [electron-transfer flavoprotein] + H(+) = (2E)-dodecenoyl-CoA + reduced [electron-transfer flavoprotein]. It catalyses the reaction tetradecanoyl-CoA + oxidized [electron-transfer flavoprotein] + H(+) = (2E)-tetradecenoyl-CoA + reduced [electron-transfer flavoprotein]. The catalysed reaction is oxidized [electron-transfer flavoprotein] + hexadecanoyl-CoA + H(+) = (2E)-hexadecenoyl-CoA + reduced [electron-transfer flavoprotein]. It participates in lipid metabolism; mitochondrial fatty acid beta-oxidation. In terms of biological role, medium-chain specific acyl-CoA dehydrogenase is one of the acyl-CoA dehydrogenases that catalyze the first step of mitochondrial fatty acid beta-oxidation, an aerobic process breaking down fatty acids into acetyl-CoA and allowing the production of energy from fats. The first step of fatty acid beta-oxidation consists in the removal of one hydrogen from C-2 and C-3 of the straight-chain fatty acyl-CoA thioester, resulting in the formation of trans-2-enoyl-CoA. Electron transfer flavoprotein (ETF) is the electron acceptor that transfers electrons to the main mitochondrial respiratory chain via ETF-ubiquinone oxidoreductase (ETF dehydrogenase). Among the different mitochondrial acyl-CoA dehydrogenases, medium-chain specific acyl-CoA dehydrogenase acts specifically on acyl-CoAs with saturated 6 to 12 carbons long primary chains. This Rattus norvegicus (Rat) protein is Medium-chain specific acyl-CoA dehydrogenase, mitochondrial.